The chain runs to 176 residues: Peptide methionine sulfoxide reductase MsrA (176 aa).

The active site involves C12.

This sequence belongs to the MsrA Met sulfoxide reductase family.

The enzyme catalyses L-methionyl-[protein] + [thioredoxin]-disulfide + H2O = L-methionyl-(S)-S-oxide-[protein] + [thioredoxin]-dithiol. It catalyses the reaction [thioredoxin]-disulfide + L-methionine + H2O = L-methionine (S)-S-oxide + [thioredoxin]-dithiol. In terms of biological role, has an important function as a repair enzyme for proteins that have been inactivated by oxidation. Catalyzes the reversible oxidation-reduction of methionine sulfoxide in proteins to methionine. In Thermus thermophilus (strain ATCC BAA-163 / DSM 7039 / HB27), this protein is Peptide methionine sulfoxide reductase MsrA.